Consider the following 349-residue polypeptide: Protein Wnt-7a (349 aa).

Positions 1–31 are cleaved as a signal peptide; it reads MNRKARRCLGHLFLSLGMVYLRIGGFSTVVA. 5 disulfide bridges follow: cysteine 73-cysteine 84, cysteine 123-cysteine 131, cysteine 133-cysteine 152, cysteine 200-cysteine 214, and cysteine 202-cysteine 209. 2 N-linked (GlcNAc...) asparagine glycosylation sites follow: asparagine 83 and asparagine 127. Serine 206 carries O-palmitoleoyl serine; by PORCN lipidation. The segment at 238–266 is disordered linker; the sequence is VEPVRASRNKRPTFLKIKKPLSYRKPMDT. Disulfide bonds link cysteine 278–cysteine 309, cysteine 294–cysteine 304, cysteine 308–cysteine 348, cysteine 324–cysteine 339, cysteine 326–cysteine 336, and cysteine 331–cysteine 332. The N-linked (GlcNAc...) asparagine glycan is linked to asparagine 295.

The protein belongs to the Wnt family. Forms a soluble 1:1 complex with AFM; this prevents oligomerization and is required for prolonged biological activity. The complex with AFM may represent the physiological form in body fluids. Interacts with PORCN. Interacts (via intrinsically disordered linker region) with RECK; interaction with RECK confers ligand selectivity for Wnt7 in brain endothelial cells and allows these cells to selectively respond to Wnt7. Interacts with FZD5. Palmitoleoylation is required for efficient binding to frizzled receptors. Depalmitoleoylation leads to Wnt signaling pathway inhibition.

It localises to the secreted. It is found in the extracellular space. The protein resides in the extracellular matrix. In terms of biological role, ligand for members of the frizzled family of seven transmembrane receptors that functions in the canonical Wnt/beta-catenin signaling pathway. Plays an important role in embryonic development, including dorsal versus ventral patterning during limb development, skeleton development and urogenital tract development. Required for central nervous system (CNS) angiogenesis and blood-brain barrier regulation. Required for normal, sexually dimorphic development of the Mullerian ducts, and for normal fertility in both sexes. Required for normal neural stem cell proliferation in the hippocampus dentate gyrus. Required for normal progress through the cell cycle in neural progenitor cells, for self-renewal of neural stem cells, and for normal neuronal differentiation and maturation. Promotes formation of synapses via its interaction with FZD5. In Chlorocebus aethiops (Green monkey), this protein is Protein Wnt-7a (WNT7A).